An 8545-amino-acid chain; its full sequence is Nuclear anchorage protein 1 (8545 aa).

Residues 1 to 325 form an actin-binding region; the sequence is MSSSPPARPC…VITYVSQFVR (325 aa). The Cytoplasmic portion of the chain corresponds to 1 to 8494; it reads MSSSPPARPC…QRSRWRRVLR (8494 aa). The Calponin-homology (CH) 1 domain maps to 23 to 130; it reads KAQKNTFTRW…LIWQIILHFQ (108 aa). Positions 148–197 are disordered; the sequence is TEEPTSSAQPEVVVTAPSPTPSSKKSHSKVSSLSGSKTSLASGEKAPSSP. Over residues 159–190 the composition is skewed to low complexity; sequence VVVTAPSPTPSSKKSHSKVSSLSGSKTSLASG. The Calponin-homology (CH) 2 domain occupies 222–328; it reads QSVEQVFLRW…YVSQFVRMFG (107 aa). Coiled-coil stretches lie at residues 754–774, 1072–1101, 1215–1236, 1324–1384, 1574–1629, 1725–1754, 1950–1981, 2103–2580, 2682–2712, 2852–2949, 3002–3119, 3178–3295, 3346–3417, 3482–3552, 3587–3703, 3781–3839, 3902–4022, 4114–4198, and 4249–4320; these read NIRDKLIELERLNEIYDNHSR, SFFQLEFDRLNEKLNMLIHDKDKLRELMVH, ADILRMKDEKKRDEKTIDEIQA, DTKK…QFED, RSIE…DLVK, ENRNDLEEVKRLAAEIDRAIDTASSMYEDA, PAIIESLDKIKDQINNARDNINRQIDNLNYNQ, DNIE…KKSD, SVKETLDKLKQAKEEDDKLAGVYDELEKIAK, IMQE…NIGK, DQIV…KTVV, DDEK…DEFK, QLQH…PEND, DELI…EKSL, KAEE…ELLD, ALKA…KEQL, AAHD…KTVV, and LDVA…DEFK. A compositionally biased stretch (basic and acidic residues) spans 3010-3019; the sequence is EAEDVTAKES. The tract at residues 3010–3033 is disordered; sequence EAEDVTAKESAKKKKKDKKKSPQE. 6 repeat units span residues 3241 to 4143, 4144 to 5097, 5098 to 6000, 6001 to 6903, 6904 to 7806, and 7807 to 8199. Residues 3241–8199 form a 6 X tandem repeat region; the sequence is QVAKDIKDSK…TLIPDLEERA (4959 aa). Positions 3913–3922 are enriched in basic and acidic residues; sequence EAEDVTAKES. The interval 3913–3936 is disordered; it reads EAEDVTAKESAKKKKKDKKKSPQE. The segment covering 4372 to 4393 has biased composition (basic and acidic residues); the sequence is ITREDGGDDNKSPDELIDDRGR. The disordered stretch occupies residues 4372 to 4395; that stretch reads ITREDGGDDNKSPDELIDDRGRST. Coiled-coil stretches lie at residues 4436 to 4506, 4541 to 4657, 4735 to 4793, 4856 to 4976, 5035 to 5152, 5203 to 5274, 5339 to 5409, 5444 to 5560, 5638 to 5696, 5759 to 5879, 5938 to 6055, 6106 to 6177, 6242 to 6312, 6347 to 6463, 6541 to 6599, 6662 to 6782, 6841 to 6958, 7009 to 7080, 7145 to 7215, 7250 to 7366, 7444 to 7502, 7565 to 7685, 7744 to 7861, 7912 to 7983, 8048 to 8118, 8153 to 8204, 8273 to 8329, and 8370 to 8390; these read DELI…EKSL, KAEE…ELLD, ALKA…KEQL, AAHD…KTVV, DDEK…DEFK, QLQH…PEND, KAEE…IWER, VAED…DINN, and STSIDLDQLLAEAKRLLKEIE. The span at 4867–4876 shows a compositional bias: basic and acidic residues; that stretch reads EAEDVTAKES. Positions 4867–4890 are disordered; that stretch reads EAEDVTAKESAKKKKKDKKKSPQE. Basic and acidic residues predominate over residues 5770-5779; sequence EAEDVTAKES. The tract at residues 5770 to 5793 is disordered; that stretch reads EAEDVTAKESAKKKKKDKKKSPQE. Residues 6673 to 6682 show a composition bias toward basic and acidic residues; sequence EAEDVTAKES. The tract at residues 6673-6696 is disordered; the sequence is EAEDVTAKESAKKKKKDKKKSPQE. Basic and acidic residues predominate over residues 7576 to 7585; that stretch reads EAEDVTAKES. Positions 7576-7599 are disordered; sequence EAEDVTAKESAKKKKKDKKKSPQE. Disordered stretches follow at residues 8391-8418 and 8449-8480; these read PRLQLAQPDHDNEDDEDEEKGSDEKPYD and SDSESRSEFDSLDSRSDGLLSPIPDDSTLSEE. Acidic residues predominate over residues 8401 to 8411; it reads DNEDDEDEEKG. Basic and acidic residues predominate over residues 8451-8464; the sequence is SESRSEFDSLDSRS. The 60-residue stretch at 8486-8545 folds into the KASH domain; sequence RSRWRRVLRTALPLQALLVLLMGAACLVPHCDDEYCCQLLNNFAKSFDPSLEFVNGPPPF. The helical; Anchor for type IV membrane protein transmembrane segment at 8495–8513 threads the bilayer; the sequence is TALPLQALLVLLMGAACLV. At 8514-8545 the chain is on the perinuclear space side; that stretch reads PHCDDEYCCQLLNNFAKSFDPSLEFVNGPPPF.

Belongs to the nesprin family. As to quaternary structure, interacts with F-actin via its N-terminal domain. Most likely interacts with unc-84; the interaction is probably required to recruit anc-1 to the nuclear envelope. Ubiquitously expressed in all postembryonic cells.

The protein localises to the nucleus outer membrane. The protein resides in the cytoplasm. Its subcellular location is the cytoskeleton. Its function is as follows. Plays a central role in nuclear and mitochondrial anchoring. Probably connects nuclei to the cytoskeleton by interacting with unc-84 at the nuclear envelope and with F-actin in the cytoplasm, creating a bridge across the nuclear envelope between the cytoskeleton and the nucleus. Has a role in positioning of the cell body of the PVQ lumbar interneuron. The polypeptide is Nuclear anchorage protein 1 (Caenorhabditis elegans).